The primary structure comprises 208 residues: Adapter protein MecA (208 aa).

It belongs to the MecA family. As to quaternary structure, homodimer.

Its function is as follows. Enables the recognition and targeting of unfolded and aggregated proteins to the ClpC protease or to other proteins involved in proteolysis. This is Adapter protein MecA from Exiguobacterium sibiricum (strain DSM 17290 / CCUG 55495 / CIP 109462 / JCM 13490 / 255-15).